The primary structure comprises 473 residues: Gamma-aminobutyric acid receptor subunit beta-3 (473 aa).

An N-terminal signal peptide occupies residues 1–25 (MWGLAGGRLFGIFSAPVLVAVVCCA). At 26–246 (QSVNDPGNMS…FRLKRNIGYF (221 aa)) the chain is on the extracellular side. N-linked (GlcNAc...) asparagine glycans are attached at residues Asn33 and Asn105. 120-122 (DTY) serves as a coordination point for benzamidine. Tyr122 lines the 4-aminobutanoate pocket. Tyr122 contributes to the histamine binding site. Cys161 and Cys175 form a disulfide bridge. Asn174 carries N-linked (GlcNAc...) asparagine glycosylation. 4-aminobutanoate contacts are provided by Glu180 and Tyr182. Residues 180–182 (ESY) and Phe225 contribute to the benzamidine site. Residue 181-182 (SY) coordinates histamine. Thr227 provides a ligand contact to 4-aminobutanoate. Thr227 lines the histamine pocket. A helical transmembrane segment spans residues 247–267 (ILQTYMPSILITILSWVSFWI). The Cytoplasmic portion of the chain corresponds to 268 to 271 (NYDA). The chain crosses the membrane as a helical span at residues 272 to 292 (SAARVALGITTVLTMTTINTH). Over 293-304 (LRETLPKIPYVK) the chain is Extracellular. The chain crosses the membrane as a helical span at residues 305–328 (AIDMYLMGCFVFVFLALLEYAFVN). Over 329 to 447 (YIFFGRGPQR…KIPDLTDVNA (119 aa)) the chain is Cytoplasmic. The chain crosses the membrane as a helical span at residues 448–470 (IDRWSRIVFPFTFSLFNLVYWLY). Topologically, residues 471–473 (YVN) are extracellular.

This sequence belongs to the ligand-gated ion channel (TC 1.A.9) family. Gamma-aminobutyric acid receptor (TC 1.A.9.5) subfamily. GABRB3 sub-subfamily. In terms of assembly, heteropentamer, formed by a combination of alpha (GABRA1-6), beta (GABRB1-3), gamma (GABRG1-3), delta (GABRD), epsilon (GABRE), rho (GABRR1-3), pi (GABRP) and theta (GABRQ) chains, each subunit exhibiting distinct physiological and pharmacological properties. Can form functional homopentamers (in vitro). Interacts with UBQLN1. May interact with KIF21B. Identified in a complex of 720 kDa composed of LHFPL4, NLGN2, GABRA1, GABRB2, GABRG2 and GABRB3. Interacts with LHFPL4. Interacts with GIT1; this interaction is required for synaptic GABRB3 surface stability and inhibitory synapse strength.

Its subcellular location is the postsynaptic cell membrane. The protein localises to the cell membrane. It localises to the cytoplasmic vesicle membrane. The enzyme catalyses chloride(in) = chloride(out). Its activity is regulated as follows. Potentiated by histamine. Its function is as follows. Beta subunit of the heteropentameric ligand-gated chloride channel gated by gamma-aminobutyric acid (GABA), a major inhibitory neurotransmitter in the brain. GABA-gated chloride channels, also named GABA(A) receptors (GABAAR), consist of five subunits arranged around a central pore and contain GABA active binding site(s) located at the alpha and beta subunit interface(s). GABAARs containing beta-3/GABRB3 subunit are found at both synaptic and extrasynaptic sites. When activated by GABA, GABAARs selectively allow the flow of chloride anions across the cell membrane down their electrochemical gradient. Chloride influx into the postsynaptic neuron following GABAAR opening decreases the neuron ability to generate a new action potential, thereby reducing nerve transmission. GABAARs containing alpha-1 and beta-3 subunits exhibit synaptogenic activity; the gamma-2 subunit being necessary but not sufficient to induce rapid synaptic contacts formation. Extrasynaptic beta-3 receptors contribute to the tonic GABAergic inhibition. GABAARs containing alpha-1, beta-3 and epsilon subunits may also permit spontaneous chloride channel activity while preserving the structural information required for GABA-gated openings. Beta-containing GABAARs can simultaneously bind GABA and histamine where histamine binds at the interface of two neighboring beta subunits, which may be involved in the regulation of sleep and wakefulness. Plays an important role in somatosensation and in the production of antinociception. The sequence is that of Gamma-aminobutyric acid receptor subunit beta-3 from Homo sapiens (Human).